The chain runs to 362 residues: Abnormal cell migration protein 13 (362 aa).

Residues 1 to 20 (MTKLLIALILFSICWKPYSA) form the signal peptide. Topologically, residues 21–237 (EPIASFFDGL…ELDPLTTVSG (217 aa)) are extracellular. 2 disulfide bridges follow: Cys36–Cys68 and Cys98–Cys136. In terms of domain architecture, CUB spans 36–175 (CKARLDRRLT…KGFKLHWGSF (140 aa)). Asn63 carries N-linked (GlcNAc...) asparagine glycosylation. N-linked (GlcNAc...) asparagine glycosylation is found at Asn145 and Asn161. The 44-residue stretch at 182–225 (NCVTGEFSCGNGECIPIESACDRFADCSNGEDLIHSRQMAANCQ) folds into the LDL-receptor class A domain. 3 disulfides stabilise this stretch: Cys183/Cys195, Cys190/Cys208, and Cys202/Cys224. Residues 238 to 258 (VFVLLFSATIILSLCGFIMFV) form a helical membrane-spanning segment. Topologically, residues 259 to 362 (CCLCKCLKST…VRNDVHRNLL (104 aa)) are cytoplasmic. The disordered stretch occupies residues 275–311 (SSHTTTTTATDYKPDPPQFYPPSPPKMPPPSAASSYT). Positions 289–305 (DPPQFYPPSPPKMPPPS) are enriched in pro residues.

Interacts with abl-1 (via SH2 and SH3 domains); the interaction is direct. Interacts with sem-5; the interaction is direct. As to expression, expressed in pharyngeal-intestinal valve cells and ventral cord neurons.

The protein localises to the cell membrane. It localises to the perikaryon. The protein resides in the cell projection. Its subcellular location is the axon. It is found in the dendrite. In terms of biological role, probable receptor that acts as an upstream signaling protein to promote the guidance, migration and positioning of the right Q neuroblast (QR) and its descendants along the anteroposterior body axis, and also the anterior migration of BDU interneurons during larval development. Associates with and recruits the downstream components tyrosine kinase abl-1 and the tyrosine kinase adapter protein sem-5 to the leading edge of migrating Q neuroblasts and their descendants to activate signaling through the two parallel wve-1 and wsp-1 pathways, respectively, and direct migration along the anteroposterior body axis. Involved in cytoskeleton dynamics regulating the organization of the actin cytoskeleton at the leading edge of migrating cells to ensure correct Q cell polarity and promote migration. Role in cytoskeleton organization may be by activation of the wve-1 and wsp-1 pathways which recruit the Arp2/3 complex to the leading edge of migrating cells. Plays a role in regulating the asymmetric distribution of the actin cytoskeleton-binding protein cor-1 in Q neuroblasts which is required for the anterior migration of QR neuroblasts. The chain is Abnormal cell migration protein 13 from Caenorhabditis elegans.